We begin with the raw amino-acid sequence, 1094 residues long: Transcriptional regulator CRZ1 (1094 aa).

Disordered regions lie at residues 1 to 29, 44 to 81, 93 to 428, and 477 to 519; these read MADP…STSS, FNSD…LDMM, GRRQ…FPPS, and RAGA…RTLS. 2 stretches are compositionally biased toward basic and acidic residues: residues 60 to 78 and 94 to 103; these read QARK…KRYL and RRQESLRKES. Ser-103 bears the Phosphoserine mark. The span at 148–159 shows a compositional bias: low complexity; sequence PNQPQQPSQQPP. Polar residues-rich tracts occupy residues 166-187 and 201-217; these read SEQS…QSSG and GTTS…QISP. Low complexity-rich tracts occupy residues 228 to 241 and 252 to 262; these read QPPQ…QQQQ and EQQQQYAQGEG. The segment covering 286–324 has biased composition (polar residues); the sequence is VISNTSHPSQYPSRTSSPFPQQSQSNMVPASTVNQTRTE. Phosphoserine occurs at positions 288 and 329. The segment covering 325 to 342 has biased composition (low complexity); sequence SFPASRSPSPFAPQQASQ. Polar residues-rich tracts occupy residues 343 to 379 and 396 to 412; these read TEAS…FNKP and IVTQ…LNQP. Positions 477–493 are enriched in low complexity; the sequence is RAGAARGAQRQGPQGQG. Residues 507 to 519 show a composition bias toward polar residues; sequence PSPQSHPLPRTLS. A phosphoserine mark is found at Ser-508, Ser-569, Ser-765, and Ser-810. Residues 835–888 form a disordered region; the sequence is ITGDDGSLLPPSNRGHAMSHSRHSSTSSIRSASPALSISSQGSSFSHHSPRMDM. Positions 858-881 are enriched in low complexity; that stretch reads SSTSSIRSASPALSISSQGSSFSH. A C2H2-type 1 zinc finger spans residues 944 to 968; sequence FKCPVPGCGSTFTRHFNLKGHLRSH. A C2H2-type 2; degenerate zinc finger spans residues 1007–1029; the sequence is FECEGCGKKFARLDALTRHHKSE. Residues 1037–1094 form a disordered region; it reads THPLPTNFDGSPMSESQYKTYKGIKSTPEGSGRRLSSTASGSGSGKRRSKKSETSEED.

Phosphorylated. Dephosphorylated by calcineurin (CNA1) which promotes nuclear localization.

The protein resides in the cytoplasm. Its subcellular location is the cytosol. The protein localises to the nucleus. Functionally, DNA-binding transcriptional activator that interacts with calcineurin-dependent response element (CDRE) promoters. Activates expression of genes required to maintain cell wall integrity during stress. Activates expression of genes required for transepithelial migration through the host blood-brain barrier. Required for adaptation to host temperature during infection. This chain is Transcriptional regulator CRZ1, found in Cryptococcus neoformans var. grubii serotype A (strain H99 / ATCC 208821 / CBS 10515 / FGSC 9487) (Filobasidiella neoformans var. grubii).